A 456-amino-acid polypeptide reads, in one-letter code: Multidrug resistance protein NorM (456 aa).

The next 12 helical transmembrane spans lie at 11–31, 53–73, 92–112, 126–146, 159–179, 189–209, 242–262, 268–288, 314–334, 356–376, 385–405, and 417–437; these read LIKL…MGFV, IWLP…PVVA, VVLA…TQFI, TVGY…FQTL, AMVI…IFVY, GVGC…LLLA, FPVA…ALLV, IIVA…MLPM, SRVG…ITVL, LLLF…AAGA, AIFN…GYIL, and AQGF…MLGV.

Belongs to the multi antimicrobial extrusion (MATE) (TC 2.A.66.1) family.

It localises to the cell inner membrane. Multidrug efflux pump that functions as a Na(+)/drug antiporter. Confers resistance to several drugs, such as norfloxacin, ciprofloxacin, ethidium, kanamycin and streptomycin. The polypeptide is Multidrug resistance protein NorM (norM) (Vibrio parahaemolyticus serotype O3:K6 (strain RIMD 2210633)).